A 538-amino-acid polypeptide reads, in one-letter code: C-22 sterol desaturase ERG5 (538 aa).

Residues 46 to 66 (LKIFATLICILLVWDQVAYQI) traverse the membrane as a helical segment. Glycyl lysine isopeptide (Lys-Gly) (interchain with G-Cter in ubiquitin) cross-links involve residues Lys-164 and Lys-198. Cys-476 is a heme binding site.

This sequence belongs to the cytochrome P450 family. In terms of assembly, interacts with ERG28. Requires heme as cofactor.

It is found in the endoplasmic reticulum membrane. It catalyses the reaction 5-dehydroepisterol + NADPH + O2 + H(+) = ergosta-5,7,22,24(28)-tetraen-3beta-ol + NADP(+) + 2 H2O. It functions in the pathway steroid metabolism; ergosterol biosynthesis; ergosterol from zymosterol: step 4/5. In terms of biological role, C-22 sterol desaturase; part of the third module of ergosterol biosynthesis pathway that includes the late steps of the pathway. ERG5 converts 5-dehydroepisterol into ergosta-5,7,22,24(28)-tetraen-3beta-ol by forming the C-22(23) double bond in the sterol side chain. The third module or late pathway involves the ergosterol synthesis itself through consecutive reactions that mainly occur in the endoplasmic reticulum (ER) membrane. Firstly, the squalene synthase ERG9 catalyzes the condensation of 2 farnesyl pyrophosphate moieties to form squalene, which is the precursor of all steroids. Squalene synthase is crucial for balancing the incorporation of farnesyl diphosphate (FPP) into sterol and nonsterol isoprene synthesis. Secondly, the squalene epoxidase ERG1 catalyzes the stereospecific oxidation of squalene to (S)-2,3-epoxysqualene, which is considered to be a rate-limiting enzyme in steroid biosynthesis. Then, the lanosterol synthase ERG7 catalyzes the cyclization of (S)-2,3 oxidosqualene to lanosterol, a reaction that forms the sterol core. In the next steps, lanosterol is transformed to zymosterol through a complex process involving various demethylation, reduction and desaturation reactions. The lanosterol 14-alpha-demethylase ERG11 (also known as CYP51) catalyzes C14-demethylation of lanosterol to produce 4,4'-dimethyl cholesta-8,14,24-triene-3-beta-ol, which is critical for ergosterol biosynthesis. The C-14 reductase ERG24 reduces the C14=C15 double bond of 4,4-dimethyl-cholesta-8,14,24-trienol to produce 4,4-dimethyl-cholesta-8,24-dienol. 4,4-dimethyl-cholesta-8,24-dienol is substrate of the C-4 demethylation complex ERG25-ERG26-ERG27 in which ERG25 catalyzes the three-step monooxygenation required for the demethylation of 4,4-dimethyl and 4alpha-methylsterols, ERG26 catalyzes the oxidative decarboxylation that results in a reduction of the 3-beta-hydroxy group at the C-3 carbon to an oxo group, and ERG27 is responsible for the reduction of the keto group on the C-3. ERG28 has a role as a scaffold to help anchor ERG25, ERG26 and ERG27 to the endoplasmic reticulum and ERG29 regulates the activity of the iron-containing C4-methylsterol oxidase ERG25. Then, the sterol 24-C-methyltransferase ERG6 catalyzes the methyl transfer from S-adenosyl-methionine to the C-24 of zymosterol to form fecosterol. The C-8 sterol isomerase ERG2 catalyzes the reaction which results in unsaturation at C-7 in the B ring of sterols and thus converts fecosterol to episterol. The sterol-C5-desaturase ERG3 then catalyzes the introduction of a C-5 double bond in the B ring to produce 5-dehydroepisterol. The C-22 sterol desaturase ERG5 further converts 5-dehydroepisterol into ergosta-5,7,22,24(28)-tetraen-3beta-ol by forming the C-22(23) double bond in the sterol side chain. Finally, ergosta-5,7,22,24(28)-tetraen-3beta-ol is substrate of the C-24(28) sterol reductase ERG4 to produce ergosterol. The polypeptide is C-22 sterol desaturase ERG5 (Saccharomyces cerevisiae (strain ATCC 204508 / S288c) (Baker's yeast)).